The chain runs to 275 residues: Nitrogenase iron protein 1 (275 aa).

9–16 (GKGGIGKS) serves as a coordination point for ATP. Position 97 (Cys97) interacts with [4Fe-4S] cluster. The residue at position 100 (Arg100) is an ADP-ribosylarginine; by dinitrogenase reductase ADP-ribosyltransferase. Cys132 lines the [4Fe-4S] cluster pocket.

This sequence belongs to the NifH/BchL/ChlL family. As to quaternary structure, homodimer. The cofactor is [4Fe-4S] cluster. The reversible ADP-ribosylation of Arg-100 inactivates the nitrogenase reductase and regulates nitrogenase activity.

The catalysed reaction is N2 + 8 reduced [2Fe-2S]-[ferredoxin] + 16 ATP + 16 H2O = H2 + 8 oxidized [2Fe-2S]-[ferredoxin] + 2 NH4(+) + 16 ADP + 16 phosphate + 6 H(+). Functionally, the key enzymatic reactions in nitrogen fixation are catalyzed by the nitrogenase complex, which has 2 components: the iron protein and the molybdenum-iron protein. The polypeptide is Nitrogenase iron protein 1 (nifH1) (Methanothermobacter thermautotrophicus (strain ATCC 29096 / DSM 1053 / JCM 10044 / NBRC 100330 / Delta H) (Methanobacterium thermoautotrophicum)).